The chain runs to 175 residues: ATP synthase subunit b (175 aa).

A helical membrane pass occupies residues 24-44 (LVLWQIAATVILIIVVRIFLW).

This sequence belongs to the ATPase B chain family. F-type ATPases have 2 components, F(1) - the catalytic core - and F(0) - the membrane proton channel. F(1) has five subunits: alpha(3), beta(3), gamma(1), delta(1), epsilon(1). F(0) has three main subunits: a(1), b(2) and c(10-14). The alpha and beta chains form an alternating ring which encloses part of the gamma chain. F(1) is attached to F(0) by a central stalk formed by the gamma and epsilon chains, while a peripheral stalk is formed by the delta and b chains.

It localises to the cell membrane. Its function is as follows. F(1)F(0) ATP synthase produces ATP from ADP in the presence of a proton or sodium gradient. F-type ATPases consist of two structural domains, F(1) containing the extramembraneous catalytic core and F(0) containing the membrane proton channel, linked together by a central stalk and a peripheral stalk. During catalysis, ATP synthesis in the catalytic domain of F(1) is coupled via a rotary mechanism of the central stalk subunits to proton translocation. In terms of biological role, component of the F(0) channel, it forms part of the peripheral stalk, linking F(1) to F(0). In Acholeplasma laidlawii (strain PG-8A), this protein is ATP synthase subunit b.